A 564-amino-acid polypeptide reads, in one-letter code: Asparagine synthetase domain-containing protein CG17486 (564 aa).

The Nucleophile role is filled by C2. In terms of domain architecture, Glutamine amidotransferase type-2 spans 2–180 (CGIFCSVVNN…PLGLFRVKLN (179 aa)). An Asparagine synthetase domain is found at 280–541 (PFCRLCMQKL…GLRDVVFLKK (262 aa)).

This Drosophila melanogaster (Fruit fly) protein is Asparagine synthetase domain-containing protein CG17486.